Reading from the N-terminus, the 250-residue chain is Troponin I 1 (250 aa).

Disordered regions lie at residues 1-59 and 194-250; these read MSQI…ERKK and SVFT…ADEE. Composition is skewed to basic and acidic residues over residues 21–45 and 206–221; these read DAQRKAQEREAKKAEVRKRLEEAGQ and DKPEWSKKKEEKKEES. Positions 229-250 are enriched in acidic residues; it reads PVEEEETAASEGEEEEEEADEE.

It belongs to the troponin I family. Strongly expressed in body wall muscle during embryogenesis, reduces during the larval stages to adult. In late-stage larvae and adults, expression is evident in the proximal gonad of both hermaphrodites and males.

In terms of biological role, troponin I is the inhibitory subunit of troponin, the thin filament regulatory complex which confers calcium-sensitivity to muscle actomyosin ATPase activity. The sequence is that of Troponin I 1 (tni-1) from Caenorhabditis elegans.